A 495-amino-acid polypeptide reads, in one-letter code: Glycerol kinase (495 aa).

Residue threonine 13 participates in ADP binding. ATP contacts are provided by threonine 13, threonine 14, and serine 15. Threonine 13 contributes to the sn-glycerol 3-phosphate binding site. Arginine 17 contributes to the ADP binding site. Sn-glycerol 3-phosphate is bound by residues arginine 83, glutamate 84, tyrosine 135, and aspartate 244. Glycerol-binding residues include arginine 83, glutamate 84, tyrosine 135, aspartate 244, and glutamine 245. The ADP site is built by threonine 266 and glycine 309. ATP is bound by residues threonine 266, glycine 309, glutamine 313, and glycine 410. Glycine 410 and asparagine 414 together coordinate ADP.

It belongs to the FGGY kinase family.

It catalyses the reaction glycerol + ATP = sn-glycerol 3-phosphate + ADP + H(+). It participates in polyol metabolism; glycerol degradation via glycerol kinase pathway; sn-glycerol 3-phosphate from glycerol: step 1/1. Inhibited by fructose 1,6-bisphosphate (FBP). Key enzyme in the regulation of glycerol uptake and metabolism. Catalyzes the phosphorylation of glycerol to yield sn-glycerol 3-phosphate. In Shewanella woodyi (strain ATCC 51908 / MS32), this protein is Glycerol kinase.